The following is a 489-amino-acid chain: uncharacterized protein (489 aa).

The next 13 membrane-spanning stretches (helical) occupy residues 1–21 (MNAA…LGIR), 40–60 (FGTV…FTFL), 74–94 (FYII…LPAV), 117–137 (PLLG…YLVL), 158–178 (AAIW…GIHG), 188–208 (IMIL…YYGG), 234–254 (AWFS…PHTF), 271–291 (IIMP…FAAI), 318–338 (FVGI…SMIL), 362–382 (VSAL…YFTF), 388–408 (IVTL…ALLF), 422–442 (FAGI…ETTI), and 456–476 (LNVG…VSLM).

It belongs to the sodium:solute symporter (SSF) (TC 2.A.21) family.

It localises to the cell membrane. This is an uncharacterized protein from Bacillus subtilis (strain 168).